The chain runs to 231 residues: MKRAVVVFSGGQDSTTCLIQALQHYDDVHCITFDYGQRHRAEIDIARELSLKLGATAHKVLDVGLLNELATSSLTRDSIPVPDYDANAQGIPNTFVPGRNILFLTLASIYAYQVGAEAVITGVCETDFSGYPDCRDEFVKALNQAIVLGIARDIRFETPLMWLNKAETWALADYYQQLDTVRYHTLTCYNGIKGDGCGQCAACHLRANGLAQYQNDSAAVMASLKQKAGLR.

Phenylalanine 8–leucine 18 is an ATP binding site. Residues cysteine 188, cysteine 197, cysteine 200, and cysteine 203 each coordinate Zn(2+).

Belongs to the QueC family. The cofactor is Zn(2+).

It carries out the reaction 7-carboxy-7-deazaguanine + NH4(+) + ATP = 7-cyano-7-deazaguanine + ADP + phosphate + H2O + H(+). It participates in purine metabolism; 7-cyano-7-deazaguanine biosynthesis. Catalyzes the ATP-dependent conversion of 7-carboxy-7-deazaguanine (CDG) to 7-cyano-7-deazaguanine (preQ(0)). This chain is 7-cyano-7-deazaguanine synthase, found in Pectobacterium carotovorum subsp. carotovorum (strain PC1).